The primary structure comprises 218 residues: 3-dehydroquinate dehydratase (218 aa).

Residues 29 to 31 (EFR) and Arg-56 contribute to the 3-dehydroquinate site. His-116 acts as the Proton donor/acceptor in catalysis. The active-site Schiff-base intermediate with substrate is the Lys-142. 3-dehydroquinate contacts are provided by Arg-180, Ser-200, and Gln-204.

Belongs to the type-I 3-dehydroquinase family. Homodimer.

It catalyses the reaction 3-dehydroquinate = 3-dehydroshikimate + H2O. It participates in metabolic intermediate biosynthesis; chorismate biosynthesis; chorismate from D-erythrose 4-phosphate and phosphoenolpyruvate: step 3/7. Involved in the third step of the chorismate pathway, which leads to the biosynthesis of aromatic amino acids. Catalyzes the cis-dehydration of 3-dehydroquinate (DHQ) and introduces the first double bond of the aromatic ring to yield 3-dehydroshikimate. This Methanococcus maripaludis (strain C7 / ATCC BAA-1331) protein is 3-dehydroquinate dehydratase.